Here is a 224-residue protein sequence, read N- to C-terminus: Transposase for insertion sequence-like element IS431mec (224 aa).

The segment at residues 33–52 is a DNA-binding region (H-T-H motif); the sequence is EILRERGVNVHHSTVYRWVQ. An Integrase catalytic domain is found at 73 to 222; that stretch reads WRIDETYIKI…SPCHEISIML (150 aa).

In terms of biological role, involved in the transposition of the insertion sequence. This is Transposase for insertion sequence-like element IS431mec (tnp) from Staphylococcus aureus (strain NCTC 8325 / PS 47).